Here is a 217-residue protein sequence, read N- to C-terminus: Protein GrpE (217 aa).

The tract at residues 1–63 is disordered; the sequence is MAETSNSENK…AADSELSLQS (63 aa). Residues 10–32 show a composition bias toward basic and acidic residues; the sequence is KTSEEAKASEKNSRSITLEETKL. A compositionally biased stretch (low complexity) spans 37–63; sequence SEESTQTTESTQAQAAEAADSELSLQS.

This sequence belongs to the GrpE family. Homodimer.

The protein localises to the cytoplasm. In terms of biological role, participates actively in the response to hyperosmotic and heat shock by preventing the aggregation of stress-denatured proteins, in association with DnaK and GrpE. It is the nucleotide exchange factor for DnaK and may function as a thermosensor. Unfolded proteins bind initially to DnaJ; upon interaction with the DnaJ-bound protein, DnaK hydrolyzes its bound ATP, resulting in the formation of a stable complex. GrpE releases ADP from DnaK; ATP binding to DnaK triggers the release of the substrate protein, thus completing the reaction cycle. Several rounds of ATP-dependent interactions between DnaJ, DnaK and GrpE are required for fully efficient folding. The protein is Protein GrpE of Leptospira borgpetersenii serovar Hardjo-bovis (strain JB197).